The sequence spans 725 residues: FYVE, RhoGEF and PH domain-containing protein 3 (725 aa).

A disordered region spans residues 1-151 (MESGRGSSTP…KADKDAGLAQ (151 aa)). Residues 124–136 (EEADSDVGEEPDS) are compositionally biased toward acidic residues. Serine 128 is modified (phosphoserine). A DH domain is found at 157–341 (KLLHIAQELL…STAANHSNAA (185 aa)). One can recognise a PH 1 domain in the interval 370–469 (ELIKEGQIQK…WIQIIQATIE (100 aa)). Positions 487-532 (QDEDPSLSPDMPITSTSPVEPVVTTEGSSGAAGLEPRKLSSKTRRD) are disordered. The segment covering 500-512 (TSTSPVEPVVTTE) has biased composition (low complexity). The span at 521–532 (EPRKLSSKTRRD) shows a compositional bias: basic and acidic residues. An FYVE-type zinc finger spans residues 532–588 (DKEKQSCKSCGETFNSITKRRHHCKLCGAVICGKCSEFKAENSRQSRVCRDCFLTQP). Zn(2+) is bound by residues cysteine 538, cysteine 541, cysteine 555, cysteine 558, cysteine 563, cysteine 566, cysteine 580, and cysteine 583. In terms of domain architecture, PH 2 spans 604–703 (PSLLCGPLRL…WLETLSTAAH (100 aa)). The disordered stretch occupies residues 703 to 725 (HGDTAQDSPGALQLQVPMGAAAP).

The protein localises to the cytoplasm. Its subcellular location is the cytoskeleton. Functionally, promotes the formation of filopodia. May activate CDC42, a member of the Ras-like family of Rho- and Rac proteins, by exchanging bound GDP for free GTP. Plays a role in regulating the actin cytoskeleton and cell shape. The sequence is that of FYVE, RhoGEF and PH domain-containing protein 3 (FGD3) from Homo sapiens (Human).